Here is a 170-residue protein sequence, read N- to C-terminus: MTFFGPKVLLLLTALIMSSGRTPLGVSGQRGDDVTTVTSETFTEDPNLVNDPATDETVLADIQPSTDDLASLNDKNTTTECRDEKFACTRLYSVHRPIKQCLHQICFTSSRRMYVINNEICSRLVCKEHEAMKDELCRQKAGLPPRRLRRSNYFRLPPCDNVNLQGPSGL.

Residues methionine 1–glycine 20 form the signal peptide. Residues arginine 30–aspartate 32 carry the Cell attachment site motif. Asparagine 76 is a glycosylation site (N-linked (GlcNAc...) asparagine).

It belongs to the MFAP family. In terms of assembly, interacts with TGFB2. Interacts with BMP2. Interacts with FBN1 (via N-terminal domain) and FBN2. Forms intermolecular disulfide bonds either with other MAGP-2 molecules or with other components of the microfibrils. As to expression, associated with fibrillin-containing microfibrils of the developing nuchal ligament.

The protein localises to the secreted. Its subcellular location is the extracellular space. The protein resides in the extracellular matrix. Its function is as follows. May play a role in hematopoiesis. In the cardiovascular system, could regulate growth factors or participate in cell signaling in maintaining large vessel integrity. Component of the elastin-associated microfibrils. The protein is Microfibrillar-associated protein 5 (MFAP5) of Bos taurus (Bovine).